The following is a 311-amino-acid chain: Glutaminase (311 aa).

Substrate is bound by residues serine 66, asparagine 116, glutamate 162, asparagine 169, tyrosine 193, tyrosine 245, and valine 263.

The protein belongs to the glutaminase family. In terms of assembly, homotetramer.

The enzyme catalyses L-glutamine + H2O = L-glutamate + NH4(+). The protein is Glutaminase of Rhodopseudomonas palustris (strain BisB5).